A 282-amino-acid polypeptide reads, in one-letter code: Pantothenate synthetase (282 aa).

Position 30-37 (30-37 (MGYYHAGH)) interacts with ATP. The Proton donor role is filled by His-37. Gln-61 is a binding site for (R)-pantoate. Gln-61 is a beta-alanine binding site. 147-150 (GQKD) contributes to the ATP binding site. Gln-153 contributes to the (R)-pantoate binding site. Residues Val-176 and 184–187 (LSSR) contribute to the ATP site.

The protein belongs to the pantothenate synthetase family. Homodimer.

It localises to the cytoplasm. The enzyme catalyses (R)-pantoate + beta-alanine + ATP = (R)-pantothenate + AMP + diphosphate + H(+). The protein operates within cofactor biosynthesis; (R)-pantothenate biosynthesis; (R)-pantothenate from (R)-pantoate and beta-alanine: step 1/1. Functionally, catalyzes the condensation of pantoate with beta-alanine in an ATP-dependent reaction via a pantoyl-adenylate intermediate. The protein is Pantothenate synthetase of Desulfovibrio desulfuricans (strain ATCC 27774 / DSM 6949 / MB).